The primary structure comprises 252 residues: MKIVISPAKSLDFEKTLPNNQFTKPAYLKQSKEIVSVLNKLNPKELSELMHISDNLAQLNWQRNKNFTTPFTTQNARPAIYTFNGEVYNGLDSYSIAEEKLAVLQNKLRILSGQYGILKPLDLMQAYRLEMGTHLPINEHKNLYSFWKEIVTNDLNKELKNNELFVNLASNEYFSVIDTKKLKVPIITPEFKDYKDEKLKIISFFAKKARGLMVRYIIDNDIETLDGLKGFNYEGYSFDANLSKGNTLVFTR.

This sequence belongs to the UPF0246 family.

This Flavobacterium psychrophilum (strain ATCC 49511 / DSM 21280 / CIP 103535 / JIP02/86) protein is UPF0246 protein FP0718.